An 82-amino-acid chain; its full sequence is Small ribosomal subunit protein bS18 (82 aa).

It belongs to the bacterial ribosomal protein bS18 family. Part of the 30S ribosomal subunit. Forms a tight heterodimer with protein bS6.

Its function is as follows. Binds as a heterodimer with protein bS6 to the central domain of the 16S rRNA, where it helps stabilize the platform of the 30S subunit. The protein is Small ribosomal subunit protein bS18 of Bifidobacterium adolescentis (strain ATCC 15703 / DSM 20083 / NCTC 11814 / E194a).